The primary structure comprises 135 residues: uncharacterized protein (135 aa).

Transmembrane regions (helical) follow at residues 4 to 24 (IIIC…WIFG), 26 to 46 (WDMP…TGVI), 68 to 88 (LILV…NGAW), and 93 to 113 (LIAY…CAAL).

It belongs to the bacteriophage holin family. Cp-1 holin subfamily.

The protein localises to the cell membrane. This is an uncharacterized protein from Clostridium perfringens (strain 13 / Type A).